Reading from the N-terminus, the 717-residue chain is Patatin-like phospholipase domain-containing protein AO090003000839 (717 aa).

A helical transmembrane segment spans residues 87-107 (WPFLFIVFGWITVLGFAYALT). A PNPLA domain is found at 277–468 (LCLSGGATFA…RTDIPIRALN (192 aa)). The short motif at 308–312 (GTSGG) is the GXSXG element. The active-site Nucleophile is the Ser310. Asp455 acts as the Proton acceptor in catalysis. Residues 620–696 (VSPAQSRRKR…STGNIFQEMR (77 aa)) form a disordered region. Residues 639 to 658 (MVERLDHNLPDRQPDNKEDL) show a composition bias toward basic and acidic residues. Residues 660 to 673 (DSSGIDSNVSSRDS) are compositionally biased toward low complexity.

The protein belongs to the PLPL family.

Its subcellular location is the membrane. Its function is as follows. Probable lipid hydrolase. The sequence is that of Patatin-like phospholipase domain-containing protein AO090003000839 from Aspergillus oryzae (strain ATCC 42149 / RIB 40) (Yellow koji mold).